Consider the following 421-residue polypeptide: UDP-N-acetylglucosamine 1-carboxyvinyltransferase (421 aa).

Residue 22–23 coordinates phosphoenolpyruvate; the sequence is KN. Position 93 (Arg93) interacts with UDP-N-acetyl-alpha-D-glucosamine. The active-site Proton donor is the Cys117. Position 117 is a 2-(S-cysteinyl)pyruvic acid O-phosphothioketal (Cys117). Residues 122 to 126, Asp308, and Val330 contribute to the UDP-N-acetyl-alpha-D-glucosamine site; that span reads RPVDL.

Belongs to the EPSP synthase family. MurA subfamily.

The protein localises to the cytoplasm. The enzyme catalyses phosphoenolpyruvate + UDP-N-acetyl-alpha-D-glucosamine = UDP-N-acetyl-3-O-(1-carboxyvinyl)-alpha-D-glucosamine + phosphate. The protein operates within cell wall biogenesis; peptidoglycan biosynthesis. Functionally, cell wall formation. Adds enolpyruvyl to UDP-N-acetylglucosamine. This chain is UDP-N-acetylglucosamine 1-carboxyvinyltransferase, found in Azotobacter vinelandii (strain DJ / ATCC BAA-1303).